We begin with the raw amino-acid sequence, 224 residues long: Ribosomal RNA small subunit methyltransferase G (224 aa).

S-adenosyl-L-methionine is bound by residues Gly92, Leu97, 143-144 (VE), and Arg156.

This sequence belongs to the methyltransferase superfamily. RNA methyltransferase RsmG family.

It localises to the cytoplasm. It carries out the reaction guanosine(527) in 16S rRNA + S-adenosyl-L-methionine = N(7)-methylguanosine(527) in 16S rRNA + S-adenosyl-L-homocysteine. In terms of biological role, specifically methylates the N7 position of guanine in position 527 of 16S rRNA. This chain is Ribosomal RNA small subunit methyltransferase G, found in Albidiferax ferrireducens (strain ATCC BAA-621 / DSM 15236 / T118) (Rhodoferax ferrireducens).